The chain runs to 184 residues: Rhox homeobox family member 1 (184 aa).

A disordered region spans residues 26–104; that stretch reads QLGAASSAEG…GPQPENMQPR (79 aa). Low complexity predominate over residues 88–99; sequence PAQAAMEGPQPE. Positions 103-162 form a DNA-binding region, homeobox; it reads PRTRRTKFTLLQVEELESVFRHTQYPDVPTRRELAENLGVTEDKVRVWFKNKRARCRRHQ. Positions 155–164 match the Nuclear localization signal motif; that stretch reads RARCRRHQRE.

It belongs to the paired-like homeobox family. PEPP subfamily. In terms of assembly, does not interact with itself. As to expression, ovary, testis and epididymis. Also detected in the prostate and the mammary gland. Expressed in many tumor cell lines derived from acute lymphocytic leukemia, prostate, endometrial adenocarcinoma, melanoma, bladder carcinoma, colon carcinoma, erythroleukemia and breast carcinoma. Not expressed in placenta. In testis, mainly expressed in germ cells, but also detected in somatic cells such as Sertoli cells, Leydig cells and peritubular cells.

It is found in the nucleus. Its function is as follows. Transcription factor maybe involved in reproductive processes. Modulates expression of target genes encoding proteins involved in processes relevant to spermatogenesis. This is Rhox homeobox family member 1 from Homo sapiens (Human).